The following is a 389-amino-acid chain: Phosphoglycerate kinase (389 aa).

Substrate is bound by residues 21 to 23 (DLN), Arg-36, 59 to 62 (HLGR), Arg-112, and Arg-145. ATP contacts are provided by residues Lys-196, Glu-313, and 342-345 (GGDT).

Belongs to the phosphoglycerate kinase family. In terms of assembly, monomer.

The protein localises to the cytoplasm. It carries out the reaction (2R)-3-phosphoglycerate + ATP = (2R)-3-phospho-glyceroyl phosphate + ADP. The protein operates within carbohydrate degradation; glycolysis; pyruvate from D-glyceraldehyde 3-phosphate: step 2/5. This chain is Phosphoglycerate kinase, found in Histophilus somni (strain 2336) (Haemophilus somnus).